The following is a 223-amino-acid chain: Phosphoribosylformylglycinamidine synthase subunit PurQ (223 aa).

In terms of domain architecture, Glutamine amidotransferase type-1 spans 3-223; that stretch reads FAVLVFPGSN…MVNSWREQNV (221 aa). Residue C85 is the Nucleophile of the active site. Catalysis depends on residues H193 and E195.

Part of the FGAM synthase complex composed of 1 PurL, 1 PurQ and 2 PurS subunits.

Its subcellular location is the cytoplasm. It catalyses the reaction N(2)-formyl-N(1)-(5-phospho-beta-D-ribosyl)glycinamide + L-glutamine + ATP + H2O = 2-formamido-N(1)-(5-O-phospho-beta-D-ribosyl)acetamidine + L-glutamate + ADP + phosphate + H(+). The catalysed reaction is L-glutamine + H2O = L-glutamate + NH4(+). It participates in purine metabolism; IMP biosynthesis via de novo pathway; 5-amino-1-(5-phospho-D-ribosyl)imidazole from N(2)-formyl-N(1)-(5-phospho-D-ribosyl)glycinamide: step 1/2. Functionally, part of the phosphoribosylformylglycinamidine synthase complex involved in the purines biosynthetic pathway. Catalyzes the ATP-dependent conversion of formylglycinamide ribonucleotide (FGAR) and glutamine to yield formylglycinamidine ribonucleotide (FGAM) and glutamate. The FGAM synthase complex is composed of three subunits. PurQ produces an ammonia molecule by converting glutamine to glutamate. PurL transfers the ammonia molecule to FGAR to form FGAM in an ATP-dependent manner. PurS interacts with PurQ and PurL and is thought to assist in the transfer of the ammonia molecule from PurQ to PurL. In Staphylococcus haemolyticus (strain JCSC1435), this protein is Phosphoribosylformylglycinamidine synthase subunit PurQ.